The primary structure comprises 79 residues: Large ribosomal subunit protein uL24 (79 aa).

The protein belongs to the universal ribosomal protein uL24 family. Part of the 50S ribosomal subunit.

Functionally, one of two assembly initiator proteins, it binds directly to the 5'-end of the 23S rRNA, where it nucleates assembly of the 50S subunit. In terms of biological role, one of the proteins that surrounds the polypeptide exit tunnel on the outside of the subunit. The polypeptide is Large ribosomal subunit protein uL24 (Aliarcobacter butzleri (strain RM4018) (Arcobacter butzleri)).